The chain runs to 524 residues: Phenylalanine--tRNA ligase alpha subunit (524 aa).

3 residues coordinate L-phenylalanine: threonine 362, tyrosine 441, and phenylalanine 467.

It belongs to the class-II aminoacyl-tRNA synthetase family. Phe-tRNA synthetase alpha subunit type 2 subfamily. Tetramer of two alpha and two beta subunits. Mg(2+) serves as cofactor.

It is found in the cytoplasm. The catalysed reaction is tRNA(Phe) + L-phenylalanine + ATP = L-phenylalanyl-tRNA(Phe) + AMP + diphosphate + H(+). The protein is Phenylalanine--tRNA ligase alpha subunit of Methanopyrus kandleri (strain AV19 / DSM 6324 / JCM 9639 / NBRC 100938).